The following is an 833-amino-acid chain: Urease (833 aa).

In terms of domain architecture, Urease spans 395–833; sequence GALDVHVHYI…LPLTKRYFVY (439 aa). Residues His-400 and His-402 each coordinate Ni(2+). Urea contacts are provided by His-402 and Ala-433. Lys-483 is a Ni(2+) binding site. At Lys-483 the chain carries N6-carboxylysine. Residues His-485 and His-512 each coordinate urea. Ni(2+) contacts are provided by His-512 and His-538. The active-site Proton donor is the His-586. Residue Asp-626 coordinates Ni(2+). Ala-629 serves as a coordination point for urea.

This sequence in the C-terminal section; belongs to the metallo-dependent hydrolases superfamily. Urease alpha subunit family. In terms of assembly, homohexamer. Requires Ni(2+) as cofactor. Post-translationally, carboxylation allows a single lysine to coordinate two nickel ions.

The enzyme catalyses urea + 2 H2O + H(+) = hydrogencarbonate + 2 NH4(+). The protein operates within nitrogen metabolism; urea degradation; CO(2) and NH(3) from urea (urease route): step 1/1. With respect to regulation, the urease accessory proteins URE4, URE6 and URE7 are required for urease activity, URE7 supplying nickel for the functional urease. Its function is as follows. Plays a nutritional role via nitrogen acquisition in the environment. Contributes to the central nervous system invasion by enhancing yeast sequestration within microcapillary beds (such as within the brain) during hematogenous spread, thereby facilitating blood-to-brain invasion by C.neoformans. Affects fitness within the mammalian phagosome, promoting non-lytic exocytosis while delaying intracellular replication and thus reducing phagolysosomal membrane damage, events that could facilitate cryptococcal dissemination when transported inside macrophages. Urease activity is also associated with the regulation of key intracellular metabolic pathways, including melanin biosynthesis, polyamine biosynthesis, as well as intracellular levels of proline and reactive oxygen species. This is Urease from Cryptococcus neoformans var. neoformans serotype D (strain B-3501A) (Filobasidiella neoformans).